The sequence spans 330 residues: G-protein coupled bile acid receptor 1 (330 aa).

The Extracellular segment spans residues 1–19 (MTPNSTGEVPSPIPKGALG). An N-linked (GlcNAc...) asparagine glycan is attached at Asn-4. Residues 20–40 (LSLALASLIITANLLLALGIA) traverse the membrane as a helical segment. Topologically, residues 41–50 (WDRRLRSPPA) are cytoplasmic. Residues 51–71 (GCFFLSLLLAGLLTGLALPTL) traverse the membrane as a helical segment. Residues 72–85 (PGLWNQSRRGYWSC) are Extracellular-facing. Asn-76 carries N-linked (GlcNAc...) asparagine glycosylation. Residues Cys-85 and Cys-155 are joined by a disulfide bond. Residues 86 to 106 (LLVYLAPNFSFLSLLANLLLV) form a helical membrane-spanning segment. Over 107–125 (HGERYMAVLRPLQPPGSIR) the chain is Cytoplasmic. Residues 126–146 (LALLLTWAGPLLFASLPALGW) form a helical membrane-spanning segment. The Extracellular segment spans residues 147 to 165 (NHWTPGANCSSQAIFPAPY). The chain crosses the membrane as a helical span at residues 166 to 186 (LYLEVYGLLLPAVGAAAFLSV). Residues 187-228 (RVLATAHRQLQDICRLERAVCRDEPSALARALTWRQARAQAG) lie on the Cytoplasmic side of the membrane. The chain crosses the membrane as a helical span at residues 229–249 (AMLLFGLCWGPYVATLLLSVL). The Extracellular portion of the chain corresponds to 250-261 (AYEQRPPLGPGT). Residues 262–282 (LLSLLSLGSASAAAVPVAMGL) traverse the membrane as a helical segment. At 283 to 330 (GDQRYTAPWRAAAQRCLQGLWGRASRDSPGPSIAYHPSSQSSVDLDLN) the chain is on the cytoplasmic side. A disordered region spans residues 309–330 (DSPGPSIAYHPSSQSSVDLDLN). A compositionally biased stretch (polar residues) spans 319–330 (PSSQSSVDLDLN).

It belongs to the G-protein coupled receptor 1 family. In terms of tissue distribution, ubiquitously expressed. Expressed at higher level in spleen and placenta. Expressed at lower level in other tissues. In digestive tissues, it is expressed in stomach, duodenum, ileocecum, ileum, jejunum, ascending colon, transverse colon, descending colon, cecum and liver, but not in esophagus and rectum.

It is found in the cell membrane. Functionally, receptor for bile acid. Bile acid-binding induces its internalization, activation of extracellular signal-regulated kinase and intracellular cAMP production. May be involved in the suppression of macrophage functions by bile acids. This chain is G-protein coupled bile acid receptor 1 (GPBAR1), found in Homo sapiens (Human).